We begin with the raw amino-acid sequence, 814 residues long: E3 ubiquitin-protein ligase TRIM71 (814 aa).

The segment at C12–D76 adopts an RING-type zinc-finger fold. Positions Q111 to R146 are disordered. Residues A120–A138 are compositionally biased toward low complexity. The B box-type 1; atypical zinc finger occupies Q142 to F189. Zn(2+) contacts are provided by C147, C150, C171, H175, C224, H227, C247, and H252. The B box-type 2 zinc finger occupies P219–L260. The stretch at R282 to E370 forms a coiled coil. Residues S425 to V526 form a Filamin repeat. NHL repeat units follow at residues T539–C582, H586–E629, L633–D676, L680–D723, A727–N770, and L774–F814.

Belongs to the TRIM/RBCC family.

It localises to the cytoplasm. Its subcellular location is the P-body. It carries out the reaction S-ubiquitinyl-[E2 ubiquitin-conjugating enzyme]-L-cysteine + [acceptor protein]-L-lysine = [E2 ubiquitin-conjugating enzyme]-L-cysteine + N(6)-ubiquitinyl-[acceptor protein]-L-lysine.. The protein operates within protein modification; protein ubiquitination. Its function is as follows. E3 ubiquitin-protein ligase that cooperates with the microRNAs (miRNAs) machinery and promotes embryonic stem cells proliferation and maintenance. Binds to miRNAs and participates in post-transcriptional repression of transcripts. Required to maintain proliferation and prevent premature differentiation of neural progenitor cells during early neural development. The protein is E3 ubiquitin-protein ligase TRIM71 (trim71) of Xenopus tropicalis (Western clawed frog).